Consider the following 384-residue polypeptide: Early estrogen-induced gene 1 protein (384 aa).

A C2 NT-type domain is found at 2 to 145 (AFLMKKKKFK…ILKVTIGMFL (144 aa)). The interval 129 to 138 (NTRQDNSILK) is required for interaction with TNFRSF11A/RANK. The segment at 173-315 (LTCKGGGTSS…RRKKDSVESH (143 aa)) is disordered. Over residues 183 to 193 (GGSSTNSLTGS) the composition is skewed to low complexity. Positions 227-254 (SRNSSYASQQSKISGYSTEHSRSSSLSD) are enriched in polar residues. 2 stretches are compositionally biased toward basic and acidic residues: residues 280-292 (GSEREHRPPEKPP) and 299-315 (HLSDRSFRRKKDSVESH).

It belongs to the EEIG family. As to quaternary structure, part of a complex composed of EEIG1, TNFRSF11A/RANK, PLCG2, GAB2, TEC and BTK; complex formation increases in the presence of TNFSF11/RANKL. Interacts with PRDM1/BLIMP1; following TNFSF11/RANKL stimulation in bone marrow-derived macrophages, the interaction promotes the binding of PRDM1/BLIMP1 to the gene promoter of IRF8.

The protein resides in the nucleus. It localises to the cytoplasm. Its subcellular location is the membrane raft. Functionally, key component of TNFSF11/RANKL- and TNF-induced osteoclastogenesis pathways, thereby mediates bone resorption in pathological bone loss conditions. Required for TNFSF11/RANKL-induced osteoclastogenesis via its interaction with TNFRSF11A/RANK, thereby facilitates the downsteam transcription of NFATC1 and activation of PLCG2. Facilitates recruitment of the transcriptional repressor PRDM1/BLIMP1 to the promoter of the anti-osteoclastogenesis gene IRF8, thereby resulting in transcription of osteoclast differentiation factors. May play a role in estrogen action. The chain is Early estrogen-induced gene 1 protein from Homo sapiens (Human).